A 156-amino-acid polypeptide reads, in one-letter code: Small ribosomal subunit protein bS16 (156 aa).

The segment covering 85–120 has biased composition (basic and acidic residues); that stretch reads GESGAEGTLKSKSEKEAFVAPERDSVILPEEPKQEE. The interval 85-156 is disordered; that stretch reads GESGAEGTLK…APAEDAEKSE (72 aa). The span at 132-150 shows a compositional bias: acidic residues; sequence PAEEAAEAPAEEAAEAPAE.

It belongs to the bacterial ribosomal protein bS16 family.

The polypeptide is Small ribosomal subunit protein bS16 (Micrococcus luteus (strain ATCC 4698 / DSM 20030 / JCM 1464 / CCM 169 / CCUG 5858 / IAM 1056 / NBRC 3333 / NCIMB 9278 / NCTC 2665 / VKM Ac-2230) (Micrococcus lysodeikticus)).